A 351-amino-acid polypeptide reads, in one-letter code: CCN family member 3 (351 aa).

Residues 1 to 21 form the signal peptide; it reads MSVFLRKQCLCLGFLLLHLLN. The IGFBP N-terminal domain maps to 25–99; sequence ATLRCPSRCP…NNETGICMVP (75 aa). 6 cysteine pairs are disulfide-bonded: cysteine 29/cysteine 55, cysteine 33/cysteine 57, cysteine 37/cysteine 58, cysteine 44/cysteine 61, cysteine 69/cysteine 83, and cysteine 75/cysteine 96. An N-linked (GlcNAc...) asparagine glycan is attached at asparagine 91. A VWFC domain is found at 102–168; it reads DNCVFDGVIY…GECCEKWTCG (67 aa). The 46-residue stretch at 199-244 folds into the TSP type-1 domain; it reads NCIEQTTEWSACSKSCGMGLSTRVTNRNLQCEMVKQTRLCMVRPCE. The S-palmitoyl cysteine moiety is linked to residue cysteine 238. 5 cysteine pairs are disulfide-bonded: cysteine 258/cysteine 295, cysteine 275/cysteine 309, cysteine 286/cysteine 325, cysteine 289/cysteine 327, and cysteine 294/cysteine 331. The CTCK domain maps to 258-332; the sequence is CLRTKKSLKS…GTCTCHSNCP (75 aa). Asparagine 274 carries N-linked (GlcNAc...) asparagine glycosylation.

The protein belongs to the CCN family. In terms of assembly, interacts with FBLN1. Interacts (via CTCK domain) with NOTCH1 (via the EGF-like repeat region). Interacts with GJA1/CX43. Interacts with ITGA5:ITGB1, ITGAV:ITGB3 and ITGAV:ITGB5. Interacts with ZDHHC22; the interaction may lead to CCN3 palmitoylation. May be palmitoylated on Cys-238, which is important for extracellular secretion. Widely expressed. Highly expressed in neurons of dorsal root ganglia and dorsal horn of the spinal cord (at protein level). Expressed in astrocytes (at protein level). In cartilage, dominantly expressed in the chondrocyte territorial matrix.

The protein localises to the secreted. It is found in the cytoplasm. The protein resides in the cell junction. It localises to the gap junction. Immediate-early protein playing a role in various cellular processes including proliferation, adhesion, migration, differentiation and survival. Acts by binding to integrins or membrane receptors such as NOTCH1. Essential regulator of hematopoietic stem and progenitor cell function. Inhibits myogenic differentiation through the activation of Notch-signaling pathway. Inhibits vascular smooth muscle cells proliferation by increasing expression of cell-cycle regulators such as CDKN2B or CDKN1A independently of TGFB1 signaling. Ligand of integrins ITGAV:ITGB3 and ITGA5:ITGB1, acts directly upon endothelial cells to stimulate pro-angiogenic activities and induces angiogenesis. In endothelial cells, supports cell adhesion, induces directed cell migration (chemotaxis) and promotes cell survival. Also plays a role in cutaneous wound healing acting as integrin receptor ligand. Supports skin fibroblast adhesion through ITGA5:ITGB1 and ITGA6:ITGB1 and induces fibroblast chemotaxis through ITGAV:ITGB5. Seems to enhance bFGF-induced DNA synthesis in fibroblasts. Involved in bone regeneration as a negative regulator. Enhances the articular chondrocytic phenotype, whereas it repressed the one representing endochondral ossification. Impairs pancreatic beta-cell function, inhibits beta-cell proliferation and insulin secretion. Plays a role as negative regulator of endothelial pro-inflammatory activation reducing monocyte adhesion, its anti-inflammatory effects occur secondary to the inhibition of NF-kappaB signaling pathway. Contributes to the control and coordination of inflammatory processes in atherosclerosis. Attenuates inflammatory pain through regulation of IL1B- and TNF-induced MMP9, MMP2 and CCL2 expression. Inhibits MMP9 expression through ITGB1 engagement. Brain osteoanabolic hormone. During lactation, maintains the maternal skeleton and viability of offspring. The protein is CCN family member 3 (Ccn3) of Rattus norvegicus (Rat).